Consider the following 126-residue polypeptide: Large ribosomal subunit protein bL20 (126 aa).

The protein belongs to the bacterial ribosomal protein bL20 family.

Functionally, binds directly to 23S ribosomal RNA and is necessary for the in vitro assembly process of the 50S ribosomal subunit. It is not involved in the protein synthesizing functions of that subunit. This chain is Large ribosomal subunit protein bL20, found in Frankia casuarinae (strain DSM 45818 / CECT 9043 / HFP020203 / CcI3).